We begin with the raw amino-acid sequence, 529 residues long: Probable anion transporter 1, chloroplastic (529 aa).

The transit peptide at 1-55 (MLYLLPLSVSCRVPGSPPAPRSRRFLDPGGGRGVGDGLGGVRVFRRRALRGTDVR) directs the protein to the chloroplast. Disordered stretches follow at residues 13–39 (VPGSPPAPRSRRFLDPGGGRGVGDGLG) and 52–78 (TDVRSNTSSSSSRKGRHDDARHDGGYG). A compositionally biased stretch (gly residues) spans 28 to 39 (PGGGRGVGDGLG). The span at 67 to 76 (RHDDARHDGG) shows a compositional bias: basic and acidic residues. The next 11 helical transmembrane spans lie at 120 to 140 (WAIVFLCFSAFLLCNMDRVNM), 158 to 178 (VGLIQSSFFWGYLLTQIAGGI), 187 to 207 (TVLGFGVIWWSIATALTPFAA), 209 to 229 (LGLPFLLVTRAFMGVGEGVAM), 251 to 271 (LVYSGMYLGSVTGLAFSPLLI), 274 to 294 (FGWPSVFYSFGSLGVFWFSTW), 340 to 360 (VWALIVSHFCHNWGTFILLTW), 378 to 398 (LFCVLPWLTMAVSANFGGWIA), 418 to 438 (IGFLGPAFFLTQLSHIDSPAM), 469 to 489 (AGVLLGLSNTAGVLAGVFGTA), and 503 to 523 (VFKVSVVLYLVGTLVWNLFST).

The protein belongs to the major facilitator superfamily. Sodium/anion cotransporter (TC 2.A.1.14) family.

Its subcellular location is the plastid. It is found in the chloroplast membrane. Functionally, probable anion transporter. The sequence is that of Probable anion transporter 1, chloroplastic (PHT4;1) from Oryza sativa subsp. japonica (Rice).